The chain runs to 1316 residues: MLDVNFFDELRIGLATAEDIRQWSYGEVKKPETINYRTLKPEKDGLFCEKIFGPTRDWECYCGKYKRVRFKGIICERCGVEVTRAKVRRERMGHIELAAPVTHIWYFKGVPSRLGYLLDLAPKDLEKIIYFAAYVITSVDNEMRHNELSTLEAEMMVERKAVEDQRDADLEARAQKLEADLAELEAEGAKADARRKVRDSGEREMRQLRDRAQRELDRLEDIWSTFTKLAPKQLIVDENLYRELQDRYGEYFTGAMGAESIQKLIETFDIDAEAEILRDVIRNGKGQKKLRALKRLKVVAAFQQSGNSPMGMVLDAVPVIPPELRPMVQLDGGRFATSDLNDLYRRVINRNNRLKRLIDLGAPEIIVNNEKRMLQESVDALFDNGRRGRPVTGPGNRPLKSLSDLLKGKQGRFRQNLLGKRVDYSGRSVIVVGPQLKLHQCGLPKLMALELFKPFVMKRLVDLNHAQNIKSAKRMVERQRPQVWDVLEEVIAEHPVLLNRAPTLHRLGIQAFEPMLVEGKAIQLHPLVCEAFNADFDGDQMAVHLPLSAEAQAEARILMLSSNNILSPASGRPLAMPRLDMVTGLYYLTTEVEGDKGAYQPAGQDSPETGVYSSPAEAIMAADRGVLSVRAKIKVRLTQLRPPAEIEDALFGHNGWQPGDAWTAETTLGRVLFNELLPLGYAFVNKQMHKKVQAAIINDLAERYPMIVVAQTVDKLKDSGFYWATRSGVTVSMADVLVPPRKKEILDSYEERAEKVEKQFQRGALNHDERNEALVEIWKEATDEVGQALREHYPADNPIITIVDSGATGNFTQTRTLAGMKGLVTNPKGEFIPRPIKSSFREGLTVLEYFINTHGARKGLADTALRTADSGYLTRRLVDVSQDVIVREHDCQTERGIMVELAERQGDGTLIRDPYIETSAYARTLGADAVDEAGNVVVARGEDLGDPEIEACLAAGITQVKVRSVLTCTTGTGVCATCYGRSMATGKLVDIGEAVGIVAAQSIGEPGTQLTMRTFHQGGVGEDITGGLPRVQELFEARVPRGKAPIADVTGRVRLEDGERFYKITIVPDDGGEEVVYDKLSKRQRLRVFKHEDGSERVLSDGDHVEVGQQLMEGSADPHEVLRVQGPREVQIHLVREVQEVYRAQGVSIHDKHIEVIVRQMLRRVTIIDSGATEFLPGSLIDRAEFEAENRRVVAESGEPAAGRPVLMGITKASLATDSWLSAASFQETTRVLTDAAINCRSDKLNGLKENVIIGKLIPAGTGINRYRNIAVQPTEEARAAAYTIPSYEDQYYSPDFGQATGAAVPLDDYGYSDYR.

The Zn(2+) site is built by Cys-60, Cys-62, Cys-75, and Cys-78. Residues Asp-535, Asp-537, and Asp-539 each coordinate Mg(2+). Positions 891, 968, 975, and 978 each coordinate Zn(2+).

Belongs to the RNA polymerase beta' chain family. As to quaternary structure, the RNAP catalytic core consists of 2 alpha, 1 beta, 1 beta' and 1 omega subunit. When a sigma factor is associated with the core the holoenzyme is formed, which can initiate transcription. The cofactor is Mg(2+). Requires Zn(2+) as cofactor.

It carries out the reaction RNA(n) + a ribonucleoside 5'-triphosphate = RNA(n+1) + diphosphate. DNA-dependent RNA polymerase catalyzes the transcription of DNA into RNA using the four ribonucleoside triphosphates as substrates. This Mycobacterium marinum (strain ATCC BAA-535 / M) protein is DNA-directed RNA polymerase subunit beta'.